We begin with the raw amino-acid sequence, 88 residues long: Small ribosomal subunit protein bS20 (88 aa).

Basic and acidic residues predominate over residues 1–23 (MPNTKSAEKALRVADANRQENRR). The disordered stretch occupies residues 1–29 (MPNTKSAEKALRVADANRQENRRAKSQVK).

This sequence belongs to the bacterial ribosomal protein bS20 family.

In terms of biological role, binds directly to 16S ribosomal RNA. In Dehalococcoides mccartyi (strain ATCC BAA-2100 / JCM 16839 / KCTC 5957 / BAV1), this protein is Small ribosomal subunit protein bS20.